The primary structure comprises 333 residues: Ribonucleoside-diphosphate reductase small chain B (333 aa).

Residues aspartate 76, glutamate 107, and histidine 110 each coordinate Fe cation. The active site involves tyrosine 114. Glutamate 169, glutamate 203, and histidine 206 together coordinate Fe cation.

It belongs to the ribonucleoside diphosphate reductase small chain family. Heterodimer of a large and a small chain. The cofactor is Fe cation. In terms of tissue distribution, expressed in roots, rosette leaves, stems and flowers.

Its subcellular location is the cytoplasm. The catalysed reaction is a 2'-deoxyribonucleoside 5'-diphosphate + [thioredoxin]-disulfide + H2O = a ribonucleoside 5'-diphosphate + [thioredoxin]-dithiol. Functionally, provides the precursors necessary for DNA synthesis. Catalyzes the biosynthesis of deoxyribonucleotides from the corresponding ribonucleotides. In Arabidopsis thaliana (Mouse-ear cress), this protein is Ribonucleoside-diphosphate reductase small chain B (RNR2B).